Here is a 264-residue protein sequence, read N- to C-terminus: 3-methyl-2-oxobutanoate hydroxymethyltransferase (264 aa).

Mg(2+) contacts are provided by Asp45 and Asp84. Residues Asp45 to Ser46, Asp84, and Lys112 each bind 3-methyl-2-oxobutanoate. Glu114 contacts Mg(2+). Glu181 (proton acceptor) is an active-site residue.

Belongs to the PanB family. Homodecamer; pentamer of dimers. Requires Mg(2+) as cofactor.

It is found in the cytoplasm. It carries out the reaction 3-methyl-2-oxobutanoate + (6R)-5,10-methylene-5,6,7,8-tetrahydrofolate + H2O = 2-dehydropantoate + (6S)-5,6,7,8-tetrahydrofolate. Its pathway is cofactor biosynthesis; (R)-pantothenate biosynthesis; (R)-pantoate from 3-methyl-2-oxobutanoate: step 1/2. In terms of biological role, catalyzes the reversible reaction in which hydroxymethyl group from 5,10-methylenetetrahydrofolate is transferred onto alpha-ketoisovalerate to form ketopantoate. The protein is 3-methyl-2-oxobutanoate hydroxymethyltransferase of Aeromonas hydrophila subsp. hydrophila (strain ATCC 7966 / DSM 30187 / BCRC 13018 / CCUG 14551 / JCM 1027 / KCTC 2358 / NCIMB 9240 / NCTC 8049).